The primary structure comprises 100 residues: ATP synthase subunit g 2, mitochondrial (100 aa).

This sequence belongs to the ATPase g subunit family. F-type ATPases have 2 components, CF(1) - the catalytic core - and CF(0) - the membrane proton channel. CF(0) seems to have nine subunits: a, b, c, d, e, f, g, F6 and 8 (or A6L).

The protein localises to the mitochondrion membrane. Its function is as follows. Mitochondrial membrane ATP synthase (F(1)F(0) ATP synthase or Complex V) produces ATP from ADP in the presence of a proton gradient across the membrane which is generated by electron transport complexes of the respiratory chain. F-type ATPases consist of two structural domains, F(1) - containing the extramembraneous catalytic core, and F(0) - containing the membrane proton channel, linked together by a central stalk and a peripheral stalk. During catalysis, ATP synthesis in the catalytic domain of F(1) is coupled via a rotary mechanism of the central stalk subunits to proton translocation. Part of the complex F(0) domain. Minor subunit located with subunit a in the membrane. This Homo sapiens (Human) protein is ATP synthase subunit g 2, mitochondrial.